Consider the following 955-residue polypeptide: 2-oxoglutarate dehydrogenase E1 component (955 aa).

It belongs to the alpha-ketoglutarate dehydrogenase family. Homodimer. Part of the 2-oxoglutarate dehydrogenase (OGDH) complex composed of E1 (2-oxoglutarate dehydrogenase), E2 (dihydrolipoamide succinyltransferase) and E3 (dihydrolipoamide dehydrogenase); the complex contains multiple copies of the three enzymatic components (E1, E2 and E3). Requires thiamine diphosphate as cofactor.

It carries out the reaction N(6)-[(R)-lipoyl]-L-lysyl-[protein] + 2-oxoglutarate + H(+) = N(6)-[(R)-S(8)-succinyldihydrolipoyl]-L-lysyl-[protein] + CO2. E1 component of the 2-oxoglutarate dehydrogenase (OGDH) complex which catalyzes the decarboxylation of 2-oxoglutarate, the first step in the conversion of 2-oxoglutarate to succinyl-CoA and CO(2). The polypeptide is 2-oxoglutarate dehydrogenase E1 component (Bacillus cereus (strain AH187)).